The chain runs to 748 residues: NAD(P)H-quinone oxidoreductase subunit 5, chloroplastic (748 aa).

The next 16 membrane-spanning stretches (helical) occupy residues 9-29, 40-60, 89-109, 121-140, 147-167, 185-205, 224-244, 258-278, 280-300, 327-347, 354-374, 396-416, 425-445, 551-571, 605-625, and 726-746; these read WIIP…LLLV, WAFP…DLSI, IDPL…MVLV, YLRF…GLVT, IYIF…FWFT, GDFG…SFEF, LFVT…SAQF, TPIS…FLVA, LFPL…IGII, LGYT…FHLI, ALLF…VGYS, TAFL…CFWS, WLYS…TAFY, LLPL…GIPF, FITN…IASL, and YLFL…FLFL.

The protein belongs to the complex I subunit 5 family. As to quaternary structure, NDH is composed of at least 16 different subunits, 5 of which are encoded in the nucleus.

The protein localises to the plastid. It localises to the chloroplast thylakoid membrane. The enzyme catalyses a plastoquinone + NADH + (n+1) H(+)(in) = a plastoquinol + NAD(+) + n H(+)(out). The catalysed reaction is a plastoquinone + NADPH + (n+1) H(+)(in) = a plastoquinol + NADP(+) + n H(+)(out). Functionally, NDH shuttles electrons from NAD(P)H:plastoquinone, via FMN and iron-sulfur (Fe-S) centers, to quinones in the photosynthetic chain and possibly in a chloroplast respiratory chain. The immediate electron acceptor for the enzyme in this species is believed to be plastoquinone. Couples the redox reaction to proton translocation, and thus conserves the redox energy in a proton gradient. In Platanus occidentalis (Sycamore), this protein is NAD(P)H-quinone oxidoreductase subunit 5, chloroplastic (ndhF).